A 273-amino-acid chain; its full sequence is Putative phosphoenolpyruvate synthase regulatory protein (273 aa).

154–161 contributes to the ADP binding site; it reads GVSRSGKT.

The protein belongs to the pyruvate, phosphate/water dikinase regulatory protein family. PSRP subfamily.

It carries out the reaction [pyruvate, water dikinase] + ADP = [pyruvate, water dikinase]-phosphate + AMP + H(+). The catalysed reaction is [pyruvate, water dikinase]-phosphate + phosphate + H(+) = [pyruvate, water dikinase] + diphosphate. Functionally, bifunctional serine/threonine kinase and phosphorylase involved in the regulation of the phosphoenolpyruvate synthase (PEPS) by catalyzing its phosphorylation/dephosphorylation. This Halorhodospira halophila (strain DSM 244 / SL1) (Ectothiorhodospira halophila (strain DSM 244 / SL1)) protein is Putative phosphoenolpyruvate synthase regulatory protein.